The following is a 358-amino-acid chain: Very long chain fatty acid elongase AAEL008004 (358 aa).

The next 7 helical transmembrane spans lie at 26-46 (WPLMSSPFPTLALCLGYVYLV), 66-86 (LILYNFVQVVFSAWLFYEIGI), 115-135 (ACWWYYFSKFTEFFDTFFFVM), 147-167 (VIHHGCMPMSVWFGVKFTPGG), 171-191 (FFGLLNTFVHIVMYTYYLFTA), 207-227 (TSLQMVQFVAIMVHAFQLLFI), and 234-254 (AFVWWIGMHAVMFLFLFNEFY). A compositionally biased stretch (polar residues) spans 285 to 295 (SAVSSNGSAIT). The segment at 285–322 (SAVSSNGSAITANGHHGKNGSVHHHSNGSATSNGTSLL) is disordered. The segment covering 299–310 (HHGKNGSVHHHS) has biased composition (basic residues). Over residues 311–322 (NGSATSNGTSLL) the composition is skewed to polar residues.

It belongs to the ELO family.

Its subcellular location is the membrane. It carries out the reaction a very-long-chain acyl-CoA + malonyl-CoA + H(+) = a very-long-chain 3-oxoacyl-CoA + CO2 + CoA. In terms of biological role, could be implicated in synthesis of very long chain fatty acids. This chain is Very long chain fatty acid elongase AAEL008004, found in Aedes aegypti (Yellowfever mosquito).